A 307-amino-acid chain; its full sequence is Ribosomal RNA small subunit methyltransferase H (307 aa).

Residues 32–34, Asp52, Phe78, Asp99, and Gln106 each bind S-adenosyl-L-methionine; that span reads GGH. A disordered region spans residues 287–307; that stretch reads KEEIESNKRSHSAKLRVAEKV.

It belongs to the methyltransferase superfamily. RsmH family.

It localises to the cytoplasm. It catalyses the reaction cytidine(1402) in 16S rRNA + S-adenosyl-L-methionine = N(4)-methylcytidine(1402) in 16S rRNA + S-adenosyl-L-homocysteine + H(+). Functionally, specifically methylates the N4 position of cytidine in position 1402 (C1402) of 16S rRNA. In Caldicellulosiruptor bescii (strain ATCC BAA-1888 / DSM 6725 / KCTC 15123 / Z-1320) (Anaerocellum thermophilum), this protein is Ribosomal RNA small subunit methyltransferase H.